A 467-amino-acid polypeptide reads, in one-letter code: L-seryl-tRNA(Sec) selenium transferase (467 aa).

Residue Lys-298 is modified to N6-(pyridoxal phosphate)lysine.

This sequence belongs to the SelA family. It depends on pyridoxal 5'-phosphate as a cofactor.

The protein resides in the cytoplasm. It carries out the reaction L-seryl-tRNA(Sec) + selenophosphate + H(+) = L-selenocysteinyl-tRNA(Sec) + phosphate. It functions in the pathway aminoacyl-tRNA biosynthesis; selenocysteinyl-tRNA(Sec) biosynthesis; selenocysteinyl-tRNA(Sec) from L-seryl-tRNA(Sec) (bacterial route): step 1/1. In terms of biological role, converts seryl-tRNA(Sec) to selenocysteinyl-tRNA(Sec) required for selenoprotein biosynthesis. This chain is L-seryl-tRNA(Sec) selenium transferase, found in Alkaliphilus metalliredigens (strain QYMF).